Reading from the N-terminus, the 527-residue chain is Berberine bridge enzyme-like 14 (527 aa).

An N-terminal signal peptide occupies residues 1-23 (MKSSTTQTLIFTVFLLLIPTSFA). A disulfide bridge connects residues C35 and C96. 7 N-linked (GlcNAc...) asparagine glycosylation sites follow: N47, N72, N161, N296, N328, N396, and N481. Residues 74 to 249 (TTRKPVAIVA…LAWKIKLVPV (176 aa)) enclose the FAD-binding PCMH-type domain. The 6-(S-cysteinyl)-8alpha-(pros-histidyl)-FAD (His-Cys) cross-link spans 111 to 174 (HDYDGMSYLS…NLRGFPAGIC (64 aa)).

It belongs to the oxygen-dependent FAD-linked oxidoreductase family. Requires FAD as cofactor. Post-translationally, the FAD cofactor is bound via a bicovalent 6-S-cysteinyl, 8alpha-N1-histidyl FAD linkage.

It is found in the secreted. The protein localises to the cell wall. The chain is Berberine bridge enzyme-like 14 from Arabidopsis thaliana (Mouse-ear cress).